The following is a 234-amino-acid chain: Large ribosomal subunit protein uL1 (234 aa).

It belongs to the universal ribosomal protein uL1 family. As to quaternary structure, part of the 50S ribosomal subunit.

Functionally, binds directly to 23S rRNA. The L1 stalk is quite mobile in the ribosome, and is involved in E site tRNA release. Protein L1 is also a translational repressor protein, it controls the translation of the L11 operon by binding to its mRNA. The polypeptide is Large ribosomal subunit protein uL1 (Klebsiella pneumoniae (strain 342)).